The sequence spans 363 residues: Putative dipeptidase YkvY (363 aa).

The Mn(2+) site is built by aspartate 222, aspartate 233, histidine 297, glutamate 326, and glutamate 340.

This sequence belongs to the peptidase M24B family. Mn(2+) is required as a cofactor.

This is Putative dipeptidase YkvY (ykvY) from Bacillus subtilis (strain 168).